The chain runs to 386 residues: MGLWGQSVPTASSARAGRYPGARTASGTRPWLLDPKILKFVVFIVAVLLPVRVDSATIPRQDEVPQQTVAPQQQRRSLKEEECPAGSHRSEYTGACNPCTEGVDYTIASNNLPSCLLCTVCKSGQTNKSSCTTTRDTVCQCEKGSFQDKNSPEMCRTCRTGCPRGMVKVSNCTPRSDIKCKNESAASSTGKTPAAEETVTTILGMLASPYHYLIIIVVLVIILAVVVVGFSCRKKFISYLKGICSGGGGGPERVHRVLFRRRSCPSRVPGAEDNARNETLSNRYLQPTQVSEQEIQGQELAELTGVTVELPEEPQRLLEQAEAEGCQRRRLLVPVNDADSADISTLLDASATLEEGHAKETIQDQLVGSEKLFYEEDEAGSATSCL.

Disordered regions lie at residues 1 to 25 (MGLWGQSVPTASSARAGRYPGARTA) and 62 to 90 (DEVPQQTVAPQQQRRSLKEEECPAGSHRS). Residues 1 to 55 (MGLWGQSVPTASSARAGRYPGARTASGTRPWLLDPKILKFVVFIVAVLLPVRVDS) form the signal peptide. Residues 56-211 (ATIPRQDEVP…ILGMLASPYH (156 aa)) lie on the Extracellular side of the membrane. TNFR-Cys repeat units follow at residues 58-97 (IPRQDEVPQQTVAPQQQRRSLKEEECPAGSHRSEYTGACN), 98-139 (PCTE…DTVC), and 140-180 (QCEK…DIKC). Residues 64-75 (VPQQTVAPQQQR) show a composition bias toward polar residues. Disulfide bonds link cysteine 83/cysteine 96, cysteine 99/cysteine 115, cysteine 118/cysteine 131, cysteine 121/cysteine 139, cysteine 141/cysteine 155, cysteine 158/cysteine 172, and cysteine 162/cysteine 180. Asparagine 127 carries N-linked (GlcNAc...) asparagine glycosylation. The N-linked (GlcNAc...) asparagine glycan is linked to asparagine 182. The chain crosses the membrane as a helical span at residues 212–232 (YLIIIVVLVIILAVVVVGFSC). Residues 233–386 (RKKFISYLKG…DEAGSATSCL (154 aa)) lie on the Cytoplasmic side of the membrane. Residues 340 to 366 (SADISTLLDASATLEEGHAKETIQDQL) form the Death; truncated domain.

In terms of tissue distribution, widely expressed, in particular in fetal kidney, lung and liver, and in adult testis and liver. Also expressed in peripheral blood leukocytes, colon and small intestine, ovary, prostate, thymus, spleen, pancreas, kidney, lung, placenta and heart.

The protein localises to the membrane. Functionally, receptor for the cytotoxic ligand TRAIL. Contains a truncated death domain and hence is not capable of inducing apoptosis but protects against TRAIL-mediated apoptosis. Reports are contradictory with regards to its ability to induce the NF-kappa-B pathway. According to PubMed:9382840, it cannot but according to PubMed:9430226, it can induce the NF-kappa-B pathway. The polypeptide is Tumor necrosis factor receptor superfamily member 10D (Homo sapiens (Human)).